A 30-amino-acid chain; its full sequence is Chassatide C3 (30 aa).

Residues Gly1 to Asn30 constitute a cross-link (cyclopeptide (Gly-Asn)). 3 disulfide bridges follow: Cys4/Cys20, Cys8/Cys22, and Cys13/Cys27.

Post-translationally, this is a cyclic peptide. Expressed in fruit, pedicel, stem and root but not in leaf (at protein level).

Its function is as follows. Probably participates in a plant defense mechanism. The polypeptide is Chassatide C3 (Chassalia chartacea (Chassalia curviflora)).